A 462-amino-acid polypeptide reads, in one-letter code: MSKLWGGRFEKTASDWVDAFGASIEFDAQLVLEDLEGSMAHVTMLGDQGILLKEEVTQILDGLQQLKQKALADELKFEVYHEDIHMNLEALLHEAIGPVAGKMHTARSRNDQVATDMHLYLKERVKEVIQLIESLQRELHAHASENVETIMPGYTHLQRAQPISLAHHLLAYFWMLERDKERFTDSLKRIDWSPLGAGALAGTTFPIDRSRSAELLGFNRVYPNSLDAVSDRDFILEFLSNASMLMMHLSRFCEELILWASEEYRFITVSDTFSTGSSMMPQKKNPDMAELVRGKSGRVIGNLMGLLTLMKGLPLAYNKDLQEDKEGMFDTVKTVQGSLSIMAGMMNELTFHPDVMKKATERDFSNATELADYLTAKGLPFREAHEVTGRLVKYCVDERLYLRELPITVFQTYSELIQEDVYHALTPEQAVARRNSYGGTGFDAVREQLKEASVCMSTMTYS.

The protein belongs to the lyase 1 family. Argininosuccinate lyase subfamily.

The protein resides in the cytoplasm. It catalyses the reaction 2-(N(omega)-L-arginino)succinate = fumarate + L-arginine. Its pathway is amino-acid biosynthesis; L-arginine biosynthesis; L-arginine from L-ornithine and carbamoyl phosphate: step 3/3. The protein is Argininosuccinate lyase of Exiguobacterium sp. (strain ATCC BAA-1283 / AT1b).